The sequence spans 492 residues: Probable beta-1,4-xylosyltransferase IRX14H (492 aa).

Topologically, residues 1–33 (MKLSVFRLSYWNRRGSSFRSSPSLDPSFDGKSP) are cytoplasmic. Residues 34–54 (SSVFWFVIHGLCCLISLILGF) traverse the membrane as a helical; Signal-anchor for type II membrane protein segment. Topologically, residues 55 to 492 (RFSHLVLFFL…FDGVKVSATS (438 aa)) are lumenal. Residues Asn99, Asn196, and Asn314 are each glycosylated (N-linked (GlcNAc...) asparagine). The tract at residues 457-492 (IKEAKSNSKPRVSKSKSYKEKQEPKAFDGVKVSATS) is disordered. A compositionally biased stretch (basic and acidic residues) spans 473-484 (SYKEKQEPKAFD).

It belongs to the glycosyltransferase 43 family. In terms of tissue distribution, expressed in developing interfascicular fibers and xylem cells in stems and developing secondary xylem in roots.

Its subcellular location is the golgi apparatus membrane. In terms of biological role, involved in the synthesis of the hemicellulose glucuronoxylan, a major component of secondary cell walls. Probably involved in the elongation of glucuronoxylan xylosyl backbone. This is Probable beta-1,4-xylosyltransferase IRX14H (IRX14H) from Arabidopsis thaliana (Mouse-ear cress).